We begin with the raw amino-acid sequence, 58 residues long: UPF0391 membrane protein Sfri_4000 (58 aa).

The next 2 membrane-spanning stretches (helical) occupy residues 6-26 and 27-47; these read LMFL…IAGA and AAGI…ISLV.

Belongs to the UPF0391 family.

The protein localises to the cell membrane. The protein is UPF0391 membrane protein Sfri_4000 of Shewanella frigidimarina (strain NCIMB 400).